We begin with the raw amino-acid sequence, 263 residues long: Hydroxyethylthiazole kinase (263 aa).

Position 39 (methionine 39) interacts with substrate. ATP-binding residues include lysine 115 and threonine 160. Residue glycine 187 coordinates substrate.

Belongs to the Thz kinase family. The cofactor is Mg(2+).

The catalysed reaction is 5-(2-hydroxyethyl)-4-methylthiazole + ATP = 4-methyl-5-(2-phosphooxyethyl)-thiazole + ADP + H(+). It participates in cofactor biosynthesis; thiamine diphosphate biosynthesis; 4-methyl-5-(2-phosphoethyl)-thiazole from 5-(2-hydroxyethyl)-4-methylthiazole: step 1/1. Its function is as follows. Catalyzes the phosphorylation of the hydroxyl group of 4-methyl-5-beta-hydroxyethylthiazole (THZ). This Staphylococcus aureus (strain COL) protein is Hydroxyethylthiazole kinase.